The primary structure comprises 176 residues: NAD(P)H-quinone oxidoreductase subunit 6, chloroplastic (176 aa).

5 helical membrane-spanning segments follow: residues 10 to 30 (FLLVFLGLGLILGGIGVVLLT), 32 to 52 (PIYSAFSLGLVLVCISLLYIL), 61 to 81 (AQLLIYVGAINVLIIFAVMFM), 92 to 112 (LWTVGNGFTLLICTSIFGLLI), and 152 to 172 (FFLPFEFISIILLAALIGAIT).

It belongs to the complex I subunit 6 family. In terms of assembly, NDH is composed of at least 16 different subunits, 5 of which are encoded in the nucleus.

Its subcellular location is the plastid. It is found in the chloroplast thylakoid membrane. The enzyme catalyses a plastoquinone + NADH + (n+1) H(+)(in) = a plastoquinol + NAD(+) + n H(+)(out). It catalyses the reaction a plastoquinone + NADPH + (n+1) H(+)(in) = a plastoquinol + NADP(+) + n H(+)(out). NDH shuttles electrons from NAD(P)H:plastoquinone, via FMN and iron-sulfur (Fe-S) centers, to quinones in the photosynthetic chain and possibly in a chloroplast respiratory chain. The immediate electron acceptor for the enzyme in this species is believed to be plastoquinone. Couples the redox reaction to proton translocation, and thus conserves the redox energy in a proton gradient. The chain is NAD(P)H-quinone oxidoreductase subunit 6, chloroplastic (ndhG) from Morus indica (Mulberry).